The following is a 155-amino-acid chain: uncharacterized protein (155 aa).

Disordered regions lie at residues 24–63 (RVGY…VVLK) and 80–155 (KAAK…DENE). S50 carries the phosphoserine modification. K108 bears the N6-acetyllysine mark. Positions 128–147 (KQSSVRKNSQKQIKNSSLLS) are enriched in polar residues. A phosphoserine mark is found at S130, S147, and S150.

This is an uncharacterized protein from Mus musculus (Mouse).